The primary structure comprises 229 residues: UPF0758 protein Cbei_0490 (229 aa).

The MPN domain occupies lysine 107 to isoleucine 229. Histidine 178, histidine 180, and aspartate 191 together coordinate Zn(2+). The short motif at histidine 178–aspartate 191 is the JAMM motif element.

Belongs to the UPF0758 family.

This Clostridium beijerinckii (strain ATCC 51743 / NCIMB 8052) (Clostridium acetobutylicum) protein is UPF0758 protein Cbei_0490.